The primary structure comprises 317 residues: 2,3-dihydroxyphenylpropionate/2,3-dihydroxicinnamic acid 1,2-dioxygenase (317 aa).

The active-site Proton donor is H115. The active-site Proton acceptor is H179.

This sequence belongs to the LigB/MhpB extradiol dioxygenase family. As to quaternary structure, homotetramer. Fe(2+) serves as cofactor.

It carries out the reaction 3-(2,3-dihydroxyphenyl)propanoate + O2 = (2Z,4E)-2-hydroxy-6-oxonona-2,4-dienedioate + H(+). The enzyme catalyses (2E)-3-(2,3-dihydroxyphenyl)prop-2-enoate + O2 = (2Z,4E,7E)-2-hydroxy-6-oxonona-2,4,7-trienedioate + H(+). The protein operates within aromatic compound metabolism; 3-phenylpropanoate degradation. Its function is as follows. Catalyzes the non-heme iron(II)-dependent oxidative cleavage of 2,3-dihydroxyphenylpropionic acid and 2,3-dihydroxicinnamic acid into 2-hydroxy-6-ketononadienedioate and 2-hydroxy-6-ketononatrienedioate, respectively. The protein is 2,3-dihydroxyphenylpropionate/2,3-dihydroxicinnamic acid 1,2-dioxygenase of Burkholderia vietnamiensis (strain G4 / LMG 22486) (Burkholderia cepacia (strain R1808)).